Consider the following 459-residue polypeptide: Glutamate--tRNA ligase 2 (459 aa).

A 'HIGH' region motif is present at residues 8–18 (PSPTGYLHIGG). The 'KMSKS' region motif lies at 237-241 (KLSKR). Residue K240 coordinates ATP.

It belongs to the class-I aminoacyl-tRNA synthetase family. Glutamate--tRNA ligase type 1 subfamily. Monomer.

The protein localises to the cytoplasm. The catalysed reaction is tRNA(Glu) + L-glutamate + ATP = L-glutamyl-tRNA(Glu) + AMP + diphosphate. Functionally, catalyzes the attachment of glutamate to tRNA(Glu) in a two-step reaction: glutamate is first activated by ATP to form Glu-AMP and then transferred to the acceptor end of tRNA(Glu). The chain is Glutamate--tRNA ligase 2 from Campylobacter curvus (strain 525.92).